The sequence spans 35 residues: Dermonecrotic toxin LrSicTox-alphaI-1 (35 aa).

H11 is a catalytic residue. A Mg(2+)-binding site is contributed by D33.

Belongs to the arthropod phospholipase D family. Class II subfamily. The cofactor is Mg(2+). Post-translationally, contains 2 disulfide bonds. Expressed by the venom gland.

Its subcellular location is the secreted. It catalyses the reaction an N-(acyl)-sphingosylphosphocholine = an N-(acyl)-sphingosyl-1,3-cyclic phosphate + choline. The enzyme catalyses an N-(acyl)-sphingosylphosphoethanolamine = an N-(acyl)-sphingosyl-1,3-cyclic phosphate + ethanolamine. The catalysed reaction is a 1-acyl-sn-glycero-3-phosphocholine = a 1-acyl-sn-glycero-2,3-cyclic phosphate + choline. It carries out the reaction a 1-acyl-sn-glycero-3-phosphoethanolamine = a 1-acyl-sn-glycero-2,3-cyclic phosphate + ethanolamine. Its function is as follows. Dermonecrotic toxins cleave the phosphodiester linkage between the phosphate and headgroup of certain phospholipids (sphingolipid and lysolipid substrates), forming an alcohol (often choline) and a cyclic phosphate. This toxin acts on sphingomyelin (SM). It may also act on ceramide phosphoethanolamine (CPE), lysophosphatidylcholine (LPC) and lysophosphatidylethanolamine (LPE), but not on lysophosphatidylserine (LPS), and lysophosphatidylglycerol (LPG). It acts by transphosphatidylation, releasing exclusively cyclic phosphate products as second products. Induces dermonecrosis, hemolysis, increased vascular permeability, edema, inflammatory response, and platelet aggregation. In Loxosceles reclusa (Brown recluse spider), this protein is Dermonecrotic toxin LrSicTox-alphaI-1.